The primary structure comprises 397 residues: Lysophospholipid transporter LplT (397 aa).

A run of 11 helical transmembrane segments spans residues 16-36 (MLAV…LLFA), 53-73 (VLQM…GQFA), 91-111 (LGAG…LVGI), 139-159 (LMES…GILA), 164-184 (LAAL…NLWI), 227-247 (LFWG…PVAL), 253-273 (AMPT…AGAA), 281-301 (TVSR…AFAV), 305-325 (LLPA…FIVP), 352-372 (NVAM…GVPP), and 373-393 (VAVG…LWVW).

It belongs to the major facilitator superfamily. LplT (TC 2.A.1.42) family.

It is found in the cell inner membrane. In terms of biological role, catalyzes the facilitated diffusion of 2-acyl-glycero-3-phosphoethanolamine (2-acyl-GPE) into the cell. This chain is Lysophospholipid transporter LplT, found in Klebsiella pneumoniae subsp. pneumoniae (strain ATCC 700721 / MGH 78578).